Here is a 104-residue protein sequence, read N- to C-terminus: MKPYALLSLLATGTLLAQGAWAEDPEVLFKNKGCVACHAIDTKMVGPAYKDVAAKFAGQAGAEAELAQRIKNGSQGVWGPIPMPPNAVSDDEAQTLAKWVLSQK.

The signal sequence occupies residues 1-22 (MKPYALLSLLATGTLLAQGAWA). Residues Cys34, Cys37, His38, and Met83 each contribute to the heme c site.

Post-translationally, binds 1 heme c group covalently per subunit.

It localises to the periplasm. Its function is as follows. Electron donor for cytochrome cd1 in nitrite and nitrate respiration. The sequence is that of Cytochrome c-551 (nirM) from Pseudomonas aeruginosa (strain ATCC 15692 / DSM 22644 / CIP 104116 / JCM 14847 / LMG 12228 / 1C / PRS 101 / PAO1).